The following is a 501-amino-acid chain: ATP synthase subunit alpha (501 aa).

169–176 (GDRQTGKT) contributes to the ATP binding site.

This sequence belongs to the ATPase alpha/beta chains family. In terms of assembly, F-type ATPases have 2 components, CF(1) - the catalytic core - and CF(0) - the membrane proton channel. CF(1) has five subunits: alpha(3), beta(3), gamma(1), delta(1), epsilon(1). CF(0) has three main subunits: a(1), b(2) and c(9-12). The alpha and beta chains form an alternating ring which encloses part of the gamma chain. CF(1) is attached to CF(0) by a central stalk formed by the gamma and epsilon chains, while a peripheral stalk is formed by the delta and b chains.

The protein localises to the cell membrane. It carries out the reaction ATP + H2O + 4 H(+)(in) = ADP + phosphate + 5 H(+)(out). In terms of biological role, produces ATP from ADP in the presence of a proton gradient across the membrane. The alpha chain is a regulatory subunit. This chain is ATP synthase subunit alpha, found in Streptococcus mutans serotype c (strain ATCC 700610 / UA159).